The sequence spans 339 residues: Putative adenosine/adenine deaminase (339 aa).

Zn(2+) contacts are provided by His16, His18, and His200. Position 18 (His18) interacts with substrate. Glu203 functions as the Proton donor in the catalytic mechanism. Asp281 contacts Zn(2+). Asp282 is a binding site for substrate.

The protein belongs to the metallo-dependent hydrolases superfamily. Adenosine and AMP deaminases family. Requires Zn(2+) as cofactor.

Functionally, putative nucleoside deaminase. May catalyze the hydrolytic deamination of adenosine or some similar substrate and play a role in purine metabolism. This Streptomyces virginiae (Streptomyces cinnamonensis) protein is Putative adenosine/adenine deaminase.